The primary structure comprises 814 residues: Origin of replication complex subunit 1 (814 aa).

Residues 1-15 (MDLSATPSRSKSGLR) are compositionally biased toward polar residues. Residues 1–127 (MDLSATPSRS…PKKPKKRAYY (127 aa)) are disordered. 2 stretches are compositionally biased toward low complexity: residues 51–62 (APMSPVTPSSVR) and 69–80 (ETPTKVTSETPV). A Nuclear localization signal motif is present at residues 105–112 (PKRQRQRQ). The span at 108-127 (QRQRQRQRQQPKKPKKRAYY) shows a compositional bias: basic residues. The tract at residues 157 to 181 (DPEAEECRVCFRAGAAVMVECDVCL) is histone H3 binding. Residues 160 to 209 (AEECRVCFRAGAAVMVECDVCLGGFHLRCVRPPLRRVPEGDWACPYCEAE) form a PHD-type zinc finger. Residues C163, C166, C177, C180, H185, and C188 each contribute to the Zn(2+) site. Residues 197 to 201 (PEGDW) form a histone H3 binding region. Positions 203 and 206 each coordinate Zn(2+). One can recognise a BAH domain in the interval 218–335 (PKPPEGKRIV…IHWHNFKRLA (118 aa)). A histone H3 binding region spans residues 310–315 (ASDQGD). Composition is skewed to acidic residues over residues 339–349 (DEPETKEDPGD) and 360–373 (SDSD…EEEE). A disordered region spans residues 339–384 (DEPETKEDPGDEPYNAGNDYVSDSDEDSEYDEEEEPTKCSSARTHQ). The necessary and sufficient for ORC complex assembly stretch occupies residues 433-804 (PKSLPCRDKE…DDVTFALKES (372 aa)). ATP is bound by residues 468-475 (GVPGTGKT) and 468-476 (GVPGTGKTM). Positions 558 and 559 each coordinate Mg(2+). 3 residues coordinate ATP: E559, N592, and R657.

It belongs to the ORC1 family. As to quaternary structure, component of the origin recognition complex (ORC) composed of at least ORC1, ORC2, ORC3, ORC4, ORC5 and ORC6. ORC is regulated in a cell-cycle and development dependent manner. It is sequentially assembled at the exit from anaphase of mitosis and disassembled as cells enter S phase. Binds unmodified and methylated histone H3. As to expression, expressed strongly in root tips and shoot apical meristem (SAM), and weakly in young leaves. Not detected in mature leaves.

It localises to the nucleus. Essential protein. Component of the origin recognition complex (ORC) that binds origins of replication. It has a role in both chromosomal replication and mating type transcriptional silencing. Binds to the ARS consensus sequence (ACS) of origins of replication. H3K4me3 effector that positively regulates the transcription of a subset of genes. Required for cell proliferation. The chain is Origin of replication complex subunit 1 from Oryza sativa subsp. japonica (Rice).